We begin with the raw amino-acid sequence, 234 residues long: Demethylmenaquinone methyltransferase (234 aa).

Residues T58, D79, and N106–A107 contribute to the S-adenosyl-L-methionine site.

This sequence belongs to the class I-like SAM-binding methyltransferase superfamily. MenG/UbiE family.

The enzyme catalyses a 2-demethylmenaquinol + S-adenosyl-L-methionine = a menaquinol + S-adenosyl-L-homocysteine + H(+). The protein operates within quinol/quinone metabolism; menaquinone biosynthesis; menaquinol from 1,4-dihydroxy-2-naphthoate: step 2/2. Methyltransferase required for the conversion of demethylmenaquinol (DMKH2) to menaquinol (MKH2). This Geobacillus kaustophilus (strain HTA426) protein is Demethylmenaquinone methyltransferase.